The chain runs to 239 residues: Orotidine 5'-phosphate decarboxylase (239 aa).

Residues D11, K33, 60-69, T117, R178, Q187, G207, and R208 contribute to the substrate site; that span reads DLKFHDIPTT. Residue K62 is the Proton donor of the active site.

It belongs to the OMP decarboxylase family. Type 1 subfamily. As to quaternary structure, homodimer.

The catalysed reaction is orotidine 5'-phosphate + H(+) = UMP + CO2. It participates in pyrimidine metabolism; UMP biosynthesis via de novo pathway; UMP from orotate: step 2/2. Functionally, catalyzes the decarboxylation of orotidine 5'-monophosphate (OMP) to uridine 5'-monophosphate (UMP). This Nitrosospira multiformis (strain ATCC 25196 / NCIMB 11849 / C 71) protein is Orotidine 5'-phosphate decarboxylase.